The sequence spans 495 residues: Rho GTPase-activating protein 19 (495 aa).

Positions 98–304 constitute a Rho-GAP domain; sequence MSLKRKEKGV…FMIKHSQKLF (207 aa). Disordered stretches follow at residues 327-362 and 393-495; these read KDDL…ETQQ and KHPS…SSSL. Basic and acidic residues-rich tracts occupy residues 350–362, 433–452, and 470–481; these read SRLD…ETQQ, QERK…KENV, and KSLEGQKEESCR.

Functionally, GTPase activator for the Rho-type GTPases by converting them to an inactive GDP-bound state. The polypeptide is Rho GTPase-activating protein 19 (ARHGAP19) (Gallus gallus (Chicken)).